Here is a 901-residue protein sequence, read N- to C-terminus: Envelope glycoprotein B (901 aa).

The first 34 residues, 1-34, serve as a signal peptide directing secretion; sequence MRPVRGIARSRILSCSWRGTWTSALTILYLGVYC. The Virion surface segment spans residues 35 to 736; that stretch reads ESTTVTPTTV…GALVTFVTNP (702 aa). N-linked (GlcNAc...) asparagine; by host glycosylation is found at N53, N60, and N66. Cystine bridges form between C84-C533, C101-C489, C174-C239, and C331-C380. The interval 141 to 147 is involved in fusion and/or binding to host membrane; the sequence is SYKYVTY. N-linked (GlcNAc...) asparagine; by host glycosylation occurs at N197. Residues 226–233 form an involved in fusion and/or binding to host membrane region; that stretch reads GSVWLYKE. Residues N270, N289, N328, N372, N398, N406, N436, N537, N571, and N623 are each glycosylated (N-linked (GlcNAc...) asparagine; by host). Cysteines 559 and 596 form a disulfide. Hydrophobic membrane proximal region regions lie at residues 683–734 and 714–734; these read VERV…TFVT and AVGAVGGAIGSFIGALVTFVT. A helical transmembrane segment spans residues 737-757; that stretch reads FGAFVVFLFCVGCITLVITVY. Residues 758–901 lie on the Intravirion side of the membrane; sequence RRQRRAMQRP…KLNTEDDVHV (144 aa). Disordered stretches follow at residues 794 to 813 and 852 to 901; these read GPEGTSGDAPPPYPGEAPYG and DDKK…DVHV. Composition is skewed to basic and acidic residues over residues 852 to 864 and 872 to 883; these read DDKKRQEIEKSSK and SETRRRPGIMDR. The short motif at 890-893 is the Internalization motif element; it reads YQKL.

It belongs to the herpesviridae glycoprotein B family. In terms of assembly, homotrimer; disulfide-linked. Binds to heparan sulfate proteoglycans. Interacts with gH/gL heterodimer. Post-translationally, a proteolytic cleavage by host furin generates two subunits that remain linked by disulfide bonds.

Its subcellular location is the virion membrane. The protein localises to the host cell membrane. The protein resides in the host endosome membrane. It localises to the host Golgi apparatus membrane. Functionally, envelope glycoprotein that forms spikes at the surface of virion envelope. Essential for the initial attachment to heparan sulfate moieties of the host cell surface proteoglycans. Involved in fusion of viral and cellular membranes leading to virus entry into the host cell. Following initial binding to its host receptors, membrane fusion is mediated by the fusion machinery composed at least of gB and the heterodimer gH/gL. May be involved in the fusion between the virion envelope and the outer nuclear membrane during virion egress. This is Envelope glycoprotein B from Guinea pig cytomegalovirus (strain 22122) (GPCMV).